The following is a 729-amino-acid chain: Golgin subfamily A member 5 (729 aa).

Residue Ser-2 is modified to N-acetylserine. Residues 2–696 (SWFADLAGRA…IFLRRYPIAR (695 aa)) lie on the Cytoplasmic side of the membrane. A dimethylated arginine mark is found at Arg-27 and Arg-89. 2 disordered regions span residues 89–222 (RTVG…SQEL) and 626–645 (SASS…VDSG). Position 116 is a phosphoserine (Ser-116). Basic and acidic residues predominate over residues 134-146 (PTGRVEVKKEKGR). A compositionally biased stretch (low complexity) spans 148-167 (PVSPSSPSGVSSVNTSVTTT). Polar residues-rich tracts occupy residues 175–186 (GSQSPGVNSSDS) and 626–638 (SASS…SAIN). A coiled-coil region spans residues 215–629 (GSSRSQELSN…LEQQVHSASS (415 aa)). A helical; Anchor for type IV membrane protein membrane pass occupies residues 697–717 (VFVIIYMALLHLWVMIVLLTY). The Lumenal portion of the chain corresponds to 718–729 (SPEMHHDQPYGK).

Homodimer. Interacts with RAB1A that has been activated by GTP-binding. Interacts with isoform CASP of CUX1. In terms of processing, highly phosphorylated during mitosis. Phosphorylation is barely detectable during interphase.

Its subcellular location is the golgi apparatus membrane. In terms of biological role, involved in maintaining Golgi structure. Stimulates the formation of Golgi stacks and ribbons. Involved in intra-Golgi retrograde transport. This chain is Golgin subfamily A member 5 (Golga5), found in Mus musculus (Mouse).